The chain runs to 406 residues: Autotransporter heptosyltransferase TibC (406 aa).

Positions 107, 108, and 109 each coordinate ADP-D-glycero-beta-D-manno-heptose. The Proton acceptor role is filled by aspartate 110. Positions 224, 226, 230, 257, 281, 302, and 326 each coordinate ADP-D-glycero-beta-D-manno-heptose. Fe(3+) is bound by residues cysteine 339, cysteine 342, cysteine 358, and cysteine 370.

This sequence belongs to the glycosyltransferase 9 family. In terms of assembly, homododecamer composed of 6 homodimers forming a ring. It depends on Fe(3+) as a cofactor.

It catalyses the reaction ADP-D-glycero-beta-D-manno-heptose + L-seryl-[protein] = O-(D-glycero-alpha-D-manno-heptosyl)-L-seryl-[protein] + ADP + H(+). Functionally, glycosylates adhesin TibA. Specifically adds anomer D-glycero-beta-D-manno-heptose. Cannot use ADP-L-glycero-beta-D-manno-heptose as a sugar donor. The chain is Autotransporter heptosyltransferase TibC from Escherichia coli O78:H11 (strain H10407 / ETEC).